The chain runs to 390 residues: Magnesium-protoporphyrin IX monomethyl ester [oxidative] cyclase (390 aa).

Belongs to the AcsF family. Fe cation serves as cofactor.

It carries out the reaction Mg-protoporphyrin IX 13-monomethyl ester + 3 NADPH + 3 O2 + 2 H(+) = 3,8-divinyl protochlorophyllide a + 3 NADP(+) + 5 H2O. The protein operates within porphyrin-containing compound metabolism; chlorophyll biosynthesis (light-independent). Its function is as follows. Catalyzes the formation of the isocyclic ring in chlorophyll biosynthesis. Mediates the cyclase reaction, which results in the formation of divinylprotochlorophyllide (Pchlide) characteristic of all chlorophylls from magnesium-protoporphyrin IX 13-monomethyl ester (MgPMME). This Prochlorococcus marinus subsp. pastoris (strain CCMP1986 / NIES-2087 / MED4) protein is Magnesium-protoporphyrin IX monomethyl ester [oxidative] cyclase.